Reading from the N-terminus, the 339-residue chain is Phenylalanine--tRNA ligase alpha subunit (339 aa).

Glutamate 254 is a Mg(2+) binding site.

The protein belongs to the class-II aminoacyl-tRNA synthetase family. Phe-tRNA synthetase alpha subunit type 1 subfamily. Tetramer of two alpha and two beta subunits. It depends on Mg(2+) as a cofactor.

Its subcellular location is the cytoplasm. The enzyme catalyses tRNA(Phe) + L-phenylalanine + ATP = L-phenylalanyl-tRNA(Phe) + AMP + diphosphate + H(+). This is Phenylalanine--tRNA ligase alpha subunit from Clostridium perfringens (strain ATCC 13124 / DSM 756 / JCM 1290 / NCIMB 6125 / NCTC 8237 / Type A).